The primary structure comprises 451 residues: D-inositol 3-phosphate glycosyltransferase (451 aa).

Residue His21 coordinates 1D-myo-inositol 3-phosphate. UDP-N-acetyl-alpha-D-glucosamine contacts are provided by residues 27-28 (QP) and Gly35. 1D-myo-inositol 3-phosphate contacts are provided by residues 32–37 (DAGGMN), Lys90, Tyr123, Thr147, and Arg167. UDP-N-acetyl-alpha-D-glucosamine contacts are provided by Arg241, Lys246, and Gln305. Mg(2+) contacts are provided by Tyr314, Arg315, and Ala317. UDP-N-acetyl-alpha-D-glucosamine-binding residues include Glu327 and Glu335. Residue Thr341 coordinates Mg(2+).

The protein belongs to the glycosyltransferase group 1 family. MshA subfamily. In terms of assembly, homodimer.

It catalyses the reaction 1D-myo-inositol 3-phosphate + UDP-N-acetyl-alpha-D-glucosamine = 1D-myo-inositol 2-acetamido-2-deoxy-alpha-D-glucopyranoside 3-phosphate + UDP + H(+). Catalyzes the transfer of a N-acetyl-glucosamine moiety to 1D-myo-inositol 3-phosphate to produce 1D-myo-inositol 2-acetamido-2-deoxy-glucopyranoside 3-phosphate in the mycothiol biosynthesis pathway. The chain is D-inositol 3-phosphate glycosyltransferase from Nocardia farcinica (strain IFM 10152).